We begin with the raw amino-acid sequence, 60 residues long: Potassium channel toxin alpha-KTx 15.9 (60 aa).

An N-terminal signal peptide occupies residues 1–22 (MKIFLPVLVMLILCSMCLLTEG). 3 disulfide bridges follow: cysteine 30-cysteine 51, cysteine 36-cysteine 56, and cysteine 40-cysteine 58.

Belongs to the short scorpion toxin superfamily. Potassium channel inhibitor family. Alpha-KTx 15 subfamily. Expressed by the venom gland.

The protein localises to the secreted. Its function is as follows. Blocker of A-type voltage-gated potassium channels of cerebellar granular cells. May also inhibit Kv4/KCND when coexpressed with DPP6 or DPP10. The occlusion of the outer entry of the K(+) conducting pore is partially reversible and affects both open and closed channels. It shares the same target in rat brain than BmTX3 (AC Q8I0L5) and AmmTX3 (AC P60208). Has been shown to weakly inhibit TRPV1 channels. This is Potassium channel toxin alpha-KTx 15.9 from Lychas mucronatus (Chinese swimming scorpion).